Consider the following 731-residue polypeptide: Bifunctional trehalose-6-phosphate synthase/phosphatase (731 aa).

The alpha,alpha-trehalose-phosphate synthase stretch occupies residues M1–I464. Residue R9 coordinates D-glucose 6-phosphate. Position 25–26 (G25–G26) interacts with UDP-alpha-D-glucose. The D-glucose 6-phosphate site is built by Y89 and D143. The UDP-alpha-D-glucose site is built by R276 and K281. Residue R314 coordinates D-glucose 6-phosphate. Residue L379 to E383 coordinates UDP-alpha-D-glucose. Residues S465–P731 form a trehalose-6-phosphate phosphatase region. D503 serves as the catalytic Nucleophile. 3 residues coordinate Mg(2+): D503, D505, and D684. D503–D505 is an alpha,alpha-trehalose 6-phosphate binding site.

This sequence in the N-terminal section; belongs to the glycosyltransferase 20 family. The protein in the C-terminal section; belongs to the trehalose phosphatase family. In terms of assembly, may interact with the putative glycosyltransferase (GT) TTX_1305. TTX_1305 is required for the trehalose-6-phosphate synthase activity of tpsp. Requires Mg(2+) as cofactor.

It catalyses the reaction D-glucose 6-phosphate + UDP-alpha-D-glucose = alpha,alpha-trehalose 6-phosphate + UDP + H(+). It carries out the reaction alpha,alpha-trehalose 6-phosphate + H2O = alpha,alpha-trehalose + phosphate. The protein operates within glycan biosynthesis; trehalose biosynthesis. Bifunctional enzyme which catalyzes the transfer of glucose from UDP-alpha-D-glucose to glucose-6-phosphate to form trehalose-6-phosphate (Tre6P) and removes the phosphate from Tre6P to produce free trehalose. The protein is Bifunctional trehalose-6-phosphate synthase/phosphatase of Thermoproteus tenax (strain ATCC 35583 / DSM 2078 / JCM 9277 / NBRC 100435 / Kra 1).